The primary structure comprises 357 residues: Endo-1,4-beta-xylanase Xyn11B (357 aa).

An N-terminal signal peptide occupies residues 1–27 (MKIFQNTKNVIVSIAWAAALCTSAVSA). Positions 29-226 (TLTSNSTGTN…SRGSSDITVS (198 aa)) constitute a GH11 domain. Glutamate 116 (nucleophile) is an active-site residue. The active-site Proton donor is glutamate 213. Positions 220–245 (SSDITVSQGGSSGGGNSSSSSSASGG) are disordered.

This sequence belongs to the glycosyl hydrolase 11 (cellulase G) family.

It localises to the secreted. It carries out the reaction Endohydrolysis of (1-&gt;4)-beta-D-xylosidic linkages in xylans.. It participates in glycan degradation; xylan degradation. Functionally, endo-acting xylanase which specifically cleaves internal linkages on the xylan backbone, releasing xylooligosaccharides. Is able to hydrolyze glucuronoxylan and the arabinoxylan from wheat. This chain is Endo-1,4-beta-xylanase Xyn11B (xyn11B), found in Cellvibrio japonicus (Pseudomonas fluorescens subsp. cellulosa).